The chain runs to 124 residues: Putative B3 domain-containing protein At1g51970 (124 aa).

Residues 18-124 (VLKKNLTESD…SRRFLFHHIN (107 aa)) constitute a DNA-binding region (TF-B3).

It localises to the nucleus. The chain is Putative B3 domain-containing protein At1g51970 from Arabidopsis thaliana (Mouse-ear cress).